The following is a 317-amino-acid chain: Melanocyte-stimulating hormone receptor (317 aa).

Over 1–37 (MPMQGAQRRLLGSLNSTPTATPNLGLAANHTGAPCLE) the chain is Extracellular. An N-linked (GlcNAc...) asparagine glycan is attached at asparagine 29. The chain crosses the membrane as a helical span at residues 38–63 (VSIPDGLFLSLGLVSLVENVLVVAAI). At 64 to 72 (AKNRNLHSP) the chain is on the cytoplasmic side. Residues 73 to 93 (MYCFICCLALSDLLVSGSNML) traverse the membrane as a helical segment. The Extracellular segment spans residues 94–118 (ETAVILLLEAGALATRASVVQQLQN). The helical transmembrane segment at 119–140 (TIDVLTCSSMLCSLCFLGAIAV) threads the bilayer. The Cytoplasmic portion of the chain corresponds to 141-163 (DRYVSIFYALRYHSIVTLPRARR). Residues 164 to 183 (AIAAIWVASVLSSTLFIAYC) form a helical membrane-spanning segment. The Extracellular portion of the chain corresponds to 184–191 (DHAAVLLC). A helical transmembrane segment spans residues 192 to 211 (LVVFFLAMLVLMAVLYVHML). Residues 212 to 240 (ARACQHAQGITRLHKRQLPAHQGFGLRGA) are Cytoplasmic-facing. A helical membrane pass occupies residues 241–266 (ATLTILLGIFFLCWGPFFLHLMLVVL). The Extracellular segment spans residues 267–279 (CPQHLTCSCIFKN). The helical transmembrane segment at 280–300 (FKVFLTLIICNTIIDPLIYAF) threads the bilayer. At 301–317 (RSQELCRTLKEVLLCSW) the chain is on the cytoplasmic side. Cysteine 315 carries the S-palmitoyl cysteine lipid modification.

This sequence belongs to the G-protein coupled receptor 1 family. In terms of assembly, interacts with MGRN1, but does not undergo MGRN1-mediated ubiquitination; this interaction competes with GNAS-binding and thus inhibits agonist-induced cAMP production. Interacts with OPN3; the interaction results in a decrease in MC1R-mediated cAMP signaling and ultimately a decrease in melanin production in melanocytes.

It localises to the cell membrane. Its function is as follows. Receptor for MSH (alpha, beta and gamma) and ACTH. The activity of this receptor is mediated by G proteins which activate adenylate cyclase. Mediates melanogenesis, the production of eumelanin (black/brown) and phaeomelanin (red/yellow), via regulation of cAMP signaling in melanocytes. The polypeptide is Melanocyte-stimulating hormone receptor (MC1R) (Alouatta palliata (Mantled howler monkey)).